We begin with the raw amino-acid sequence, 83 residues long: Large ribosomal subunit protein bL27 (83 aa).

The interval 1 to 20 (MAHKKGASSSRNGRDSNPQY) is disordered. The segment covering 7–19 (ASSSRNGRDSNPQ) has biased composition (polar residues).

This sequence belongs to the bacterial ribosomal protein bL27 family.

The polypeptide is Large ribosomal subunit protein bL27 (Bifidobacterium animalis subsp. lactis (strain AD011)).